A 215-amino-acid polypeptide reads, in one-letter code: MSDNAQLTGLCDRFRGFYPVVIDVETAGFNAKTDALLEIAAITLKMDEQGWLMPDTTLHFHVEPFVGANLQPEALAFNGIDPNDPDRGAVSEYEALHEIFKVVRKGIKASGCNRAIMVAHNANFDHSFMMAAAERASLKRNPFHPFATFDTAALAGLALGQTVLSKACQTAGMDFDSTQAHSALYDTERTAVLFCEIVNRWKRLGGWPLPAAEEV.

One can recognise an Exonuclease domain in the interval 20–194 (VVIDVETAGF…YDTERTAVLF (175 aa)). Residues Asp23, Glu25, His181, and Asp186 each coordinate Mg(2+). Residue His181 is the Proton donor/acceptor of the active site.

Belongs to the RNase T family. Homodimer. Mg(2+) is required as a cofactor.

In terms of biological role, trims short 3' overhangs of a variety of RNA species, leaving a one or two nucleotide 3' overhang. Responsible for the end-turnover of tRNA: specifically removes the terminal AMP residue from uncharged tRNA (tRNA-C-C-A). Also appears to be involved in tRNA biosynthesis. This Shigella dysenteriae serotype 1 (strain Sd197) protein is Ribonuclease T.